The following is a 98-amino-acid chain: Large ribosomal subunit protein bL28 (98 aa).

The protein belongs to the bacterial ribosomal protein bL28 family.

In Beijerinckia indica subsp. indica (strain ATCC 9039 / DSM 1715 / NCIMB 8712), this protein is Large ribosomal subunit protein bL28.